The chain runs to 251 residues: Aliphatic sulfonates import ATP-binding protein SsuB (251 aa).

Positions 3–231 (VSINEVSKYF…PRNKTSQSFQ (229 aa)) constitute an ABC transporter domain. 39–46 (GPSGCGKS) contributes to the ATP binding site.

The protein belongs to the ABC transporter superfamily. Aliphatic sulfonates importer (TC 3.A.1.17.2) family. In terms of assembly, the complex is composed of two ATP-binding proteins (SsuB), two transmembrane proteins (SsuC) and a solute-binding protein (SsuA).

It localises to the cell membrane. It catalyses the reaction ATP + H2O + aliphatic sulfonate-[sulfonate-binding protein]Side 1 = ADP + phosphate + aliphatic sulfonateSide 2 + [sulfonate-binding protein]Side 1.. In terms of biological role, part of the ABC transporter complex SsuABC involved in aliphatic sulfonates import. Responsible for energy coupling to the transport system. The sequence is that of Aliphatic sulfonates import ATP-binding protein SsuB from Bacillus thuringiensis subsp. konkukian (strain 97-27).